Consider the following 250-residue polypeptide: Small ribosomal subunit protein uS2 (250 aa).

It belongs to the universal ribosomal protein uS2 family.

In Chloroherpeton thalassium (strain ATCC 35110 / GB-78), this protein is Small ribosomal subunit protein uS2.